The chain runs to 698 residues: MNNPLVNQAAMVLPVFLLSACLGGGGSFDLDSVDTEAPRPAPKYQDVSSEKPQAQKDQGGYGFAMRLKRRNWYRQANPKEDEIKLSENDWEQTDNGDIKNPSKQKNIINALTGNNGGASLQDSSQENQGISKVTGHHNFQYVWSGFFYKQIGSTFERKDSSITAARSGPDGYIFYKGKDPSRKLPVSGEVMYKGTWDFLTDVKTSQKFTDLGNTSTRPGDRYSAFSGELDYIVNKDSDKKDEHVGWGLTTEITVDFEKKTLSGKLIKNNRVNNDNDKHTTQYYSLDATLRGNRFSGKAEATDKPKNDGETKEHPFVSDSSSLSGGFFGPKGEELGFRFLSDDQKVAVVGSAKTQDKPRNGAVASGGAGAAASNGAAGTSSENSKLTTVLDAVELTLNDKKIKNLDNFSNAAQLVVDGIMIPLLPEASESGKNQANQGTNGGTAFTRKFNHTPKSDEKDTQAGTAENGNPAASNTAGDANGKTKTYEVEVCCSNLNYLKYGMLTRKNSKSAMQAGESSSQADAKTEQVGQSMFLQGERTDEKEIPNDQNVVYRGSWYGHIANGTSWSGNASDKEGGNRADFTVNFGTKKINGTLTADNRQAATFTIVGDIEGNGFSGTAKTADSGFDLDQSNNTRTPKAYITNAKVQGGFYGPKAEELGGWFAYSDDKQTKNATDASGNGNSASSATVVFGAKRQKPVQ.

An N-terminal signal peptide occupies residues 1–20 (MNNPLVNQAAMVLPVFLLSA). The N-palmitoyl cysteine moiety is linked to residue C21. C21 carries S-diacylglycerol cysteine lipidation. Disordered stretches follow at residues 33–58 (VDTEAPRPAPKYQDVSSEKPQAQKDQ), 83–102 (IKLSENDWEQTDNGDIKNPS), 294–324 (FSGKAEATDKPKNDGETKEHPFVSDSSSLSG), 349–383 (GSAKTQDKPRNGAVASGGAGAAASNGAAGTSSENS), 428–479 (ESGK…GDAN), and 669–698 (TKNATDASGNGNSASSATVVFGAKRQKPVQ). Over residues 46–56 (DVSSEKPQAQK) the composition is skewed to polar residues. Basic and acidic residues predominate over residues 299-315 (EATDKPKNDGETKEHPF). A compositionally biased stretch (low complexity) spans 369–383 (AAASNGAAGTSSENS). Polar residues predominate over residues 460–476 (QAGTAENGNPAASNTAG). The segment covering 671-686 (NATDASGNGNSASSAT) has biased composition (low complexity).

Belongs to the TbpB family. Binds only human holo-transferrin (TF), via the TF C-terminus. Forms a large complex with TbpA and TF. Interacts via its C-terminal domain with Slam1.

It localises to the cell outer membrane. The protein localises to the cell surface. Its function is as follows. Neisseria acquires iron by extracting it from serum transferrin (TF) in its human host. Acts as a TF receptor and is required for TF utilization. Involved in the initial capture of TF. Helps select only those TF molecules that can be used as an iron source and concentrates them on the cell surface, maintaining the iron-loaded status of the TF C-terminal lobe until its delivery to TbpA. This is Transferrin-binding protein B from Neisseria meningitidis serogroup A / serotype 4A (strain DSM 15465 / Z2491).